Reading from the N-terminus, the 374-residue chain is UDP-N-acetylglucosamine--N-acetylmuramyl-(pentapeptide) pyrophosphoryl-undecaprenol N-acetylglucosamine transferase (374 aa).

Residues 35–37 (TGG), N144, R185, S211, and Q305 contribute to the UDP-N-acetyl-alpha-D-glucosamine site.

It belongs to the glycosyltransferase 28 family. MurG subfamily.

The protein resides in the cell inner membrane. It carries out the reaction di-trans,octa-cis-undecaprenyl diphospho-N-acetyl-alpha-D-muramoyl-L-alanyl-D-glutamyl-meso-2,6-diaminopimeloyl-D-alanyl-D-alanine + UDP-N-acetyl-alpha-D-glucosamine = di-trans,octa-cis-undecaprenyl diphospho-[N-acetyl-alpha-D-glucosaminyl-(1-&gt;4)]-N-acetyl-alpha-D-muramoyl-L-alanyl-D-glutamyl-meso-2,6-diaminopimeloyl-D-alanyl-D-alanine + UDP + H(+). Its pathway is cell wall biogenesis; peptidoglycan biosynthesis. In terms of biological role, cell wall formation. Catalyzes the transfer of a GlcNAc subunit on undecaprenyl-pyrophosphoryl-MurNAc-pentapeptide (lipid intermediate I) to form undecaprenyl-pyrophosphoryl-MurNAc-(pentapeptide)GlcNAc (lipid intermediate II). This Trichodesmium erythraeum (strain IMS101) protein is UDP-N-acetylglucosamine--N-acetylmuramyl-(pentapeptide) pyrophosphoryl-undecaprenol N-acetylglucosamine transferase.